Here is a 529-residue protein sequence, read N- to C-terminus: Peptide chain release factor 3 (529 aa).

Residues 11–280 enclose the tr-type G domain; the sequence is AKRRTFAIIS…GLVAWAPAPM (270 aa). Residues 20-27, 88-92, and 142-145 each bind GTP; these read SHPDAGKT, DTPGH, and NKLD.

This sequence belongs to the TRAFAC class translation factor GTPase superfamily. Classic translation factor GTPase family. PrfC subfamily.

It localises to the cytoplasm. Its function is as follows. Increases the formation of ribosomal termination complexes and stimulates activities of RF-1 and RF-2. It binds guanine nucleotides and has strong preference for UGA stop codons. It may interact directly with the ribosome. The stimulation of RF-1 and RF-2 is significantly reduced by GTP and GDP, but not by GMP. The protein is Peptide chain release factor 3 of Salmonella agona (strain SL483).